Reading from the N-terminus, the 505-residue chain is RNA-splicing ligase RtcB homolog (505 aa).

Asp119, Cys122, His227, His259, and His353 together coordinate Mn(2+). 226–230 contributes to the GMP binding site; sequence NHYAE. Residues 353–354, 402–405, Ser409, 428–431, and Lys504 contribute to the GMP site; these read HN, GGSM, and HGAG. His428 functions as the GMP-histidine intermediate in the catalytic mechanism.

The protein belongs to the RtcB family. In terms of assembly, catalytic component of the tRNA-splicing ligase complex. Mn(2+) is required as a cofactor.

It localises to the nucleus. The protein localises to the cytoplasm. The enzyme catalyses a 3'-end 3'-phospho-ribonucleotide-RNA + a 5'-end dephospho-ribonucleoside-RNA + GTP = a ribonucleotidyl-ribonucleotide-RNA + GMP + diphosphate. The catalysed reaction is a 3'-end 2',3'-cyclophospho-ribonucleotide-RNA + a 5'-end dephospho-ribonucleoside-RNA + GTP + H2O = a ribonucleotidyl-ribonucleotide-RNA + GMP + diphosphate + H(+). In terms of biological role, catalytic subunit of the tRNA-splicing ligase complex that acts by directly joining spliced tRNA halves to mature-sized tRNAs. Required for the ligation of mRNAs and specifically, regulates xbp-1 mRNA splicing during the endoplasmic reticulum stress-induced unfolded protein response. Has a neuroprotective role in the age-dependent degeneration of dopamine neurons, which is mediated by xbp-1. The protein is RNA-splicing ligase RtcB homolog of Caenorhabditis elegans.